Here is a 311-residue protein sequence, read N- to C-terminus: Putative pyruvate, phosphate dikinase regulatory protein (311 aa).

180-187 (GVSRSSKT) lines the ADP pocket.

It belongs to the pyruvate, phosphate/water dikinase regulatory protein family. PDRP subfamily.

It catalyses the reaction N(tele)-phospho-L-histidyl/L-threonyl-[pyruvate, phosphate dikinase] + ADP = N(tele)-phospho-L-histidyl/O-phospho-L-threonyl-[pyruvate, phosphate dikinase] + AMP + H(+). The catalysed reaction is N(tele)-phospho-L-histidyl/O-phospho-L-threonyl-[pyruvate, phosphate dikinase] + phosphate + H(+) = N(tele)-phospho-L-histidyl/L-threonyl-[pyruvate, phosphate dikinase] + diphosphate. Functionally, bifunctional serine/threonine kinase and phosphorylase involved in the regulation of the pyruvate, phosphate dikinase (PPDK) by catalyzing its phosphorylation/dephosphorylation. This chain is Putative pyruvate, phosphate dikinase regulatory protein, found in Paramagnetospirillum magneticum (strain ATCC 700264 / AMB-1) (Magnetospirillum magneticum).